A 236-amino-acid polypeptide reads, in one-letter code: MIDDFAPTSSTGDAALYRLLSWLSPAYPVGAYTYSHGLETAVEDGLVHHRQSLADYVATVLHDGAAAIDGPLLAASWRAAQAEDHARLDELAVLGAAWRSSAETALETSAQGRAFCDVTQAAWPDSRFAAFCARHDESIVHPVAFGVASCWQGIPLRAALFGYLSAFAANLVSAGVRLIPLGQTDGQRAQAALLDDLQRATDHGLNTALEDAGSAVPMLDLFSIRHETQYTRLFRS.

It belongs to the UreF family. UreD, UreF and UreG form a complex that acts as a GTP-hydrolysis-dependent molecular chaperone, activating the urease apoprotein by helping to assemble the nickel containing metallocenter of UreC. The UreE protein probably delivers the nickel.

It localises to the cytoplasm. In terms of biological role, required for maturation of urease via the functional incorporation of the urease nickel metallocenter. This chain is Urease accessory protein UreF, found in Granulibacter bethesdensis (strain ATCC BAA-1260 / CGDNIH1).